The following is a 554-amino-acid chain: Dihydroxy-acid dehydratase (554 aa).

Cys51 contacts [2Fe-2S] cluster. Asp83 serves as a coordination point for Mg(2+). Cys124 provides a ligand contact to [2Fe-2S] cluster. The Mg(2+) site is built by Asp125 and Lys126. Lys126 carries the post-translational modification N6-carboxylysine. Cys193 contacts [2Fe-2S] cluster. Glu444 contributes to the Mg(2+) binding site. The active-site Proton acceptor is Ser470.

This sequence belongs to the IlvD/Edd family. Homodimer. It depends on [2Fe-2S] cluster as a cofactor. The cofactor is Mg(2+).

It catalyses the reaction (2R)-2,3-dihydroxy-3-methylbutanoate = 3-methyl-2-oxobutanoate + H2O. The enzyme catalyses (2R,3R)-2,3-dihydroxy-3-methylpentanoate = (S)-3-methyl-2-oxopentanoate + H2O. It functions in the pathway amino-acid biosynthesis; L-isoleucine biosynthesis; L-isoleucine from 2-oxobutanoate: step 3/4. The protein operates within amino-acid biosynthesis; L-valine biosynthesis; L-valine from pyruvate: step 3/4. Its function is as follows. Functions in the biosynthesis of branched-chain amino acids. Catalyzes the dehydration of (2R,3R)-2,3-dihydroxy-3-methylpentanoate (2,3-dihydroxy-3-methylvalerate) into 2-oxo-3-methylpentanoate (2-oxo-3-methylvalerate) and of (2R)-2,3-dihydroxy-3-methylbutanoate (2,3-dihydroxyisovalerate) into 2-oxo-3-methylbutanoate (2-oxoisovalerate), the penultimate precursor to L-isoleucine and L-valine, respectively. This is Dihydroxy-acid dehydratase from Vesicomyosocius okutanii subsp. Calyptogena okutanii (strain HA).